We begin with the raw amino-acid sequence, 160 residues long: Phosphopantetheine adenylyltransferase (160 aa).

Residue Ser9 coordinates substrate. Residues 9-10 (SF) and His17 each bind ATP. Residues Lys41, Thr73, and Arg87 each coordinate substrate. ATP-binding positions include 88–90 (GMR), Glu98, and 123–129 (YTFFSSS).

The protein belongs to the bacterial CoaD family. As to quaternary structure, homohexamer. Mg(2+) is required as a cofactor.

The protein localises to the cytoplasm. The enzyme catalyses (R)-4'-phosphopantetheine + ATP + H(+) = 3'-dephospho-CoA + diphosphate. The protein operates within cofactor biosynthesis; coenzyme A biosynthesis; CoA from (R)-pantothenate: step 4/5. Its function is as follows. Reversibly transfers an adenylyl group from ATP to 4'-phosphopantetheine, yielding dephospho-CoA (dPCoA) and pyrophosphate. The chain is Phosphopantetheine adenylyltransferase from Roseiflexus sp. (strain RS-1).